The primary structure comprises 401 residues: Chalcone synthase 6 (401 aa).

The active site involves Cys-168.

It belongs to the thiolase-like superfamily. Chalcone/stilbene synthases family.

The catalysed reaction is (E)-4-coumaroyl-CoA + 3 malonyl-CoA + 3 H(+) = 2',4,4',6'-tetrahydroxychalcone + 3 CO2 + 4 CoA. It participates in secondary metabolite biosynthesis; flavonoid biosynthesis. In terms of biological role, the primary product of this enzyme is 4,2',4',6'-tetrahydroxychalcone (also termed naringenin-chalcone or chalcone) which can under specific conditions spontaneously isomerize into naringenin. In Sorghum bicolor (Sorghum), this protein is Chalcone synthase 6 (CHS6).